We begin with the raw amino-acid sequence, 350 residues long: tRNA N6-adenosine threonylcarbamoyltransferase (350 aa).

2 residues coordinate Fe cation: His-113 and His-117. Residues 135–139 (LVSGG), Asp-169, Gly-182, Asp-186, and Asn-282 each bind substrate. A Fe cation-binding site is contributed by Asp-310.

This sequence belongs to the KAE1 / TsaD family. Fe(2+) is required as a cofactor.

The protein localises to the cytoplasm. It catalyses the reaction L-threonylcarbamoyladenylate + adenosine(37) in tRNA = N(6)-L-threonylcarbamoyladenosine(37) in tRNA + AMP + H(+). Its function is as follows. Required for the formation of a threonylcarbamoyl group on adenosine at position 37 (t(6)A37) in tRNAs that read codons beginning with adenine. Is involved in the transfer of the threonylcarbamoyl moiety of threonylcarbamoyl-AMP (TC-AMP) to the N6 group of A37, together with TsaE and TsaB. TsaD likely plays a direct catalytic role in this reaction. This chain is tRNA N6-adenosine threonylcarbamoyltransferase, found in Corynebacterium diphtheriae (strain ATCC 700971 / NCTC 13129 / Biotype gravis).